The following is a 507-amino-acid chain: ATP synthase subunit alpha 2 (507 aa).

ATP is bound at residue 171-178 (GDRATGKT).

The protein belongs to the ATPase alpha/beta chains family. As to quaternary structure, F-type ATPases have 2 components, CF(1) - the catalytic core - and CF(0) - the membrane proton channel. CF(1) has five subunits: alpha(3), beta(3), gamma(1), delta(1), epsilon(1). CF(0) has three main subunits: a(1), b(2) and c(9-12). The alpha and beta chains form an alternating ring which encloses part of the gamma chain. CF(1) is attached to CF(0) by a central stalk formed by the gamma and epsilon chains, while a peripheral stalk is formed by the delta and b chains.

It is found in the cell inner membrane. The enzyme catalyses ATP + H2O + 4 H(+)(in) = ADP + phosphate + 5 H(+)(out). Produces ATP from ADP in the presence of a proton gradient across the membrane. The alpha chain is a regulatory subunit. The protein is ATP synthase subunit alpha 2 of Gluconobacter oxydans (strain 621H) (Gluconobacter suboxydans).